Here is a 281-residue protein sequence, read N- to C-terminus: MEMO1 family protein APE_1771 (281 aa).

The protein belongs to the MEMO1 family.

This Aeropyrum pernix (strain ATCC 700893 / DSM 11879 / JCM 9820 / NBRC 100138 / K1) protein is MEMO1 family protein APE_1771.